Reading from the N-terminus, the 312-residue chain is DNA-directed RNA polymerase subunit alpha (312 aa).

Positions 1–229 (MLQYQIDRIE…ELFQPLATVT (229 aa)) are alpha N-terminal domain (alpha-NTD). Residues 245–312 (QIPLEELNLS…ISIPQSRTSA (68 aa)) are alpha C-terminal domain (alpha-CTD).

It belongs to the RNA polymerase alpha chain family. As to quaternary structure, in cyanobacteria the RNAP catalytic core is composed of 2 alpha, 1 beta, 1 beta', 1 gamma and 1 omega subunit. When a sigma factor is associated with the core the holoenzyme is formed, which can initiate transcription.

It carries out the reaction RNA(n) + a ribonucleoside 5'-triphosphate = RNA(n+1) + diphosphate. Its function is as follows. DNA-dependent RNA polymerase catalyzes the transcription of DNA into RNA using the four ribonucleoside triphosphates as substrates. The polypeptide is DNA-directed RNA polymerase subunit alpha (Prochlorococcus marinus (strain MIT 9313)).